The chain runs to 91 residues: Potassium channel toxin TstKMK (91 aa).

A signal peptide spans 1 to 25 (MVATNRCCVFALLFALLLVHSLTEA). Positions 26–42 (GKGKEILGKIKEKIIEA) are excised as a propeptide. The 34-residue stretch at 58 to 91 (EYACPAIDKFCEDHCAAKKAVGKCDDFKCKCIKL) folds into the BetaSPN-type CS-alpha/beta domain. 3 disulfide bridges follow: Cys61-Cys81, Cys68-Cys86, and Cys72-Cys88.

Belongs to the long chain scorpion toxin family. Class 2 subfamily. Expressed by the venom gland.

The protein resides in the secreted. Functionally, the full peptide presents antibacterial and cytotoxic activities. The synthetic C-terminus (AA 33-76) inhibits voltage-gated potassium channels Kv1.1/KCNA1, Kv1.2/KCNA2, and Kv1.3/KCNA3. This is Potassium channel toxin TstKMK from Tityus stigmurus (Brazilian scorpion).